Reading from the N-terminus, the 670-residue chain is DNA ligase (670 aa).

Residues 32-36 (DAEYD), 81-82 (SL), and Glu-111 contribute to the NAD(+) site. Lys-113 (N6-AMP-lysine intermediate) is an active-site residue. 4 residues coordinate NAD(+): Arg-134, Glu-171, Lys-290, and Lys-314. Residues Cys-408, Cys-411, Cys-426, and Cys-432 each contribute to the Zn(2+) site. Residues 591 to 670 (EEALSLKGQT…DGLLAVLAGE (80 aa)) enclose the BRCT domain.

Belongs to the NAD-dependent DNA ligase family. LigA subfamily. Requires Mg(2+) as cofactor. Mn(2+) serves as cofactor.

It catalyses the reaction NAD(+) + (deoxyribonucleotide)n-3'-hydroxyl + 5'-phospho-(deoxyribonucleotide)m = (deoxyribonucleotide)n+m + AMP + beta-nicotinamide D-nucleotide.. Its function is as follows. DNA ligase that catalyzes the formation of phosphodiester linkages between 5'-phosphoryl and 3'-hydroxyl groups in double-stranded DNA using NAD as a coenzyme and as the energy source for the reaction. It is essential for DNA replication and repair of damaged DNA. In Shewanella sediminis (strain HAW-EB3), this protein is DNA ligase.